Consider the following 267-residue polypeptide: Stomatin-3 (267 aa).

Residues 17 to 37 (FVALICAWAFLLLTFPVSIFF) traverse the membrane as a helical segment.

The protein belongs to the band 7/mec-2 family.

Its subcellular location is the membrane. This is Stomatin-3 (sto-3) from Caenorhabditis elegans.